The following is a 533-amino-acid chain: Probable G-protein coupled receptor Mth-like 14 (533 aa).

Residues 1–23 (MNLGHWNFLLALISLQTFFNASA) form the signal peptide. Asn-20, Asn-29, Asn-30, Asn-36, and Asn-47 each carry an N-linked (GlcNAc...) asparagine glycan. Over 24–242 (QISTVNNSSK…QVEEQIAFAK (219 aa)) the chain is Extracellular. Residues 86–108 (VQSPVDNPLDPADCSQREKYRKQ) are disordered. Cysteines 120 and 216 form a disulfide. Asn-133, Asn-178, and Asn-206 each carry an N-linked (GlcNAc...) asparagine glycan. A helical transmembrane segment spans residues 243-263 (VVFVAVLMLISMPCLLLVSYL). The Cytoplasmic portion of the chain corresponds to 264–279 (HMTLRLLRNLHGLSLS). A helical membrane pass occupies residues 280–300 (LMSLCLASGYFVHSVVHIYGI). At 301–303 (PNQ) the chain is on the extracellular side. A helical transmembrane segment spans residues 304 to 324 (GFIGYVIQFCILSYFFWYLCI). The Cytoplasmic segment spans residues 325-347 (CFNVLLNVWYKLPCCIQCSKSWA). The helical transmembrane segment at 348–368 (TFNFACYAVFAFSGPATIVAL) threads the bilayer. Residues 369-395 (TVQKGLPGMPSYFLQGLTESIRDSQRY) lie on the Extracellular side of the membrane. Residues 396 to 416 (FIPPVSTILFLSFLLNIISFF) traverse the membrane as a helical segment. Over 417–451 (GFQRISGYAKAEKNIQERKCLFDQQKYEDVKKDAK) the chain is Cytoplasmic. The helical transmembrane segment at 452-472 (CVSLLGIIMVVSWLLEIITFY) threads the bilayer. Residues 473 to 480 (SGSNSNYL) lie on the Extracellular side of the membrane. A helical transmembrane segment spans residues 481-501 (ILCDMVNGLQGVWVLLIFLVV). Residues 502-533 (RRRRTIILRWWYDRGSHEIEGTELQALSNSPT) lie on the Cytoplasmic side of the membrane.

This sequence belongs to the G-protein coupled receptor 2 family. Mth subfamily.

The protein resides in the cell membrane. The sequence is that of Probable G-protein coupled receptor Mth-like 14 (mthl14) from Drosophila melanogaster (Fruit fly).